Consider the following 191-residue polypeptide: GDP-mannose pyrophosphatase (191 aa).

GDP-alpha-D-mannose-binding positions include Tyr17, 38–40 (KRE), Arg67, and 85–87 (AGL). Positions 43-180 (DRGNGATILL…EIRDGKTVLL (138 aa)) constitute a Nudix hydrolase domain. Mg(2+)-binding residues include Ala85, Glu100, and Glu104. A Nudix box motif is present at residues 86-106 (GLLDNDEPEVCIRKEAIEETG). Residues Glu104, Glu127, 150–151 (DE), and Lys176 each bind GDP-alpha-D-mannose. Residue Glu151 participates in Mg(2+) binding.

Belongs to the Nudix hydrolase family. NudK subfamily. In terms of assembly, homodimer. The cofactor is Mg(2+).

It catalyses the reaction GDP-alpha-D-mannose + H2O = alpha-D-mannose 1-phosphate + GMP + 2 H(+). Nucleoside diphosphate sugar hydrolase that hydrolyzes GDP-mannose as its preferred substrate, yielding GMP and mannose-1-phosphate. The chain is GDP-mannose pyrophosphatase (nudK) from Shigella flexneri serotype 5b (strain 8401).